We begin with the raw amino-acid sequence, 696 residues long: uncharacterized protein (696 aa).

The GGDEF domain maps to Ser293–Glu426. Residues Arg435–Asn689 form the EAL domain.

This is an uncharacterized protein from Synechocystis sp. (strain ATCC 27184 / PCC 6803 / Kazusa).